Consider the following 601-residue polypeptide: Proline--tRNA ligase (601 aa).

Belongs to the class-II aminoacyl-tRNA synthetase family. ProS type 1 subfamily. In terms of assembly, homodimer.

It is found in the cytoplasm. It catalyses the reaction tRNA(Pro) + L-proline + ATP = L-prolyl-tRNA(Pro) + AMP + diphosphate. Its function is as follows. Catalyzes the attachment of proline to tRNA(Pro) in a two-step reaction: proline is first activated by ATP to form Pro-AMP and then transferred to the acceptor end of tRNA(Pro). As ProRS can inadvertently accommodate and process non-cognate amino acids such as alanine and cysteine, to avoid such errors it has two additional distinct editing activities against alanine. One activity is designated as 'pretransfer' editing and involves the tRNA(Pro)-independent hydrolysis of activated Ala-AMP. The other activity is designated 'posttransfer' editing and involves deacylation of mischarged Ala-tRNA(Pro). The misacylated Cys-tRNA(Pro) is not edited by ProRS. This is Proline--tRNA ligase from Trichodesmium erythraeum (strain IMS101).